We begin with the raw amino-acid sequence, 105 residues long: RxLR effector protein PITG_18670 (105 aa).

Positions 1–21 (MRSIFYFALAFAALTCSNASA) are cleaved as a signal peptide. Residues 39–57 (RSLRVAGQEVARGDRGEEI) carry the RxLR-dEER motif.

It belongs to the RxLR effector family.

It localises to the secreted. Its subcellular location is the host nucleus. The protein localises to the host nucleolus. The protein resides in the host cytoplasm. Effector that enhances P.infestans colonization of Nicotiana benthamiana leaves. This chain is RxLR effector protein PITG_18670, found in Phytophthora infestans (strain T30-4) (Potato late blight agent).